A 95-amino-acid polypeptide reads, in one-letter code: Small ribosomal subunit protein bS6 (95 aa).

Belongs to the bacterial ribosomal protein bS6 family.

Binds together with bS18 to 16S ribosomal RNA. This is Small ribosomal subunit protein bS6 from Bacillus velezensis (strain DSM 23117 / BGSC 10A6 / LMG 26770 / FZB42) (Bacillus amyloliquefaciens subsp. plantarum).